The following is a 106-amino-acid chain: Nucleoid-associated protein XOO1065 (106 aa).

Positions 80 to 89 (KIDAESKDRM) are enriched in basic and acidic residues. Residues 80 to 106 (KIDAESKDRMGSATAGMQLPPGMKLPF) are disordered.

It belongs to the YbaB/EbfC family. In terms of assembly, homodimer.

Its subcellular location is the cytoplasm. It is found in the nucleoid. Functionally, binds to DNA and alters its conformation. May be involved in regulation of gene expression, nucleoid organization and DNA protection. This is Nucleoid-associated protein XOO1065 from Xanthomonas oryzae pv. oryzae (strain KACC10331 / KXO85).